We begin with the raw amino-acid sequence, 294 residues long: N-acetylmuramic acid 6-phosphate etherase (294 aa).

One can recognise an SIS domain in the interval 54–217; the sequence is VIKSFEEEGR…STASMIGVGK (164 aa). Catalysis depends on Glu-82, which acts as the Proton donor. Residue Glu-113 is part of the active site.

The protein belongs to the GCKR-like family. MurNAc-6-P etherase subfamily. In terms of assembly, homodimer.

It carries out the reaction N-acetyl-D-muramate 6-phosphate + H2O = N-acetyl-D-glucosamine 6-phosphate + (R)-lactate. The protein operates within amino-sugar metabolism; N-acetylmuramate degradation. Functionally, specifically catalyzes the cleavage of the D-lactyl ether substituent of MurNAc 6-phosphate, producing GlcNAc 6-phosphate and D-lactate. The chain is N-acetylmuramic acid 6-phosphate etherase from Bacillus cereus (strain G9842).